The chain runs to 569 residues: Urease subunit beta (569 aa).

The 439-residue stretch at 131–569 (GGIDTHIHFI…VSLAQLFSIF (439 aa)) folds into the Urease domain. Residues His136, His138, and Lys219 each coordinate Ni(2+). Residue Lys219 is modified to N6-carboxylysine. Residue His221 participates in substrate binding. The Ni(2+) site is built by His248 and His274. The Proton donor role is filled by His322. Asp362 serves as a coordination point for Ni(2+).

Belongs to the metallo-dependent hydrolases superfamily. Urease alpha subunit family. In terms of assembly, heterohexamer of 3 UreA (alpha) and 3 UreB (beta) subunits. Ni cation serves as cofactor. In terms of processing, carboxylation allows a single lysine to coordinate two nickel ions.

Its subcellular location is the cytoplasm. The catalysed reaction is urea + 2 H2O + H(+) = hydrogencarbonate + 2 NH4(+). Its pathway is nitrogen metabolism; urea degradation; CO(2) and NH(3) from urea (urease route): step 1/1. This is Urease subunit beta from Helicobacter pylori (strain Shi470).